Consider the following 83-residue polypeptide: BmKBT-like peptide (83 aa).

The signal sequence occupies residues 1–19 (MKAALLLVISTLMLIGVLT). In terms of domain architecture, LCN-type CS-alpha/beta spans 21–81 (KSGYPIQHDG…TWSRETNKCR (61 aa)). Disulfide bonds link Cys31–Cys80, Cys35–Cys54, Cys41–Cys61, and Cys45–Cys63. Lys83 is a propeptide (removed by a carboxypeptidase).

Belongs to the long (4 C-C) scorpion toxin superfamily. Sodium channel inhibitor family. Beta subfamily. In terms of tissue distribution, expressed by the venom gland.

The protein resides in the secreted. Sodium channel inhibitor. Possesses potent toxicity in mice but induces only paralysis in cotton bollworm. The sequence is that of BmKBT-like peptide from Olivierus martensii (Manchurian scorpion).